The following is a 285-amino-acid chain: RNA polymerase sigma factor RpoH (285 aa).

Residues 53–122 (LILSHLRFVI…IHEYVLRNWR (70 aa)) are sigma-70 factor domain-2. The short motif at 77 to 80 (DLIQ) is the Interaction with polymerase core subunit RpoC element. The tract at residues 229 to 281 (ALLRLDERSRNIIRARWLDKKEKNTLQKIANNYGISAERVRQLEKNAMKKLKI) is sigma-70 factor domain-4. The H-T-H motif DNA-binding region spans 254–273 (LQKIANNYGISAERVRQLEK).

This sequence belongs to the sigma-70 factor family. RpoH subfamily. Interacts with the RNA polymerase core enzyme.

It is found in the cytoplasm. Sigma factors are initiation factors that promote the attachment of RNA polymerase to specific initiation sites and are then released. This sigma factor is involved in regulation of expression of heat shock genes. The chain is RNA polymerase sigma factor RpoH from Buchnera aphidicola subsp. Schizaphis graminum (strain Sg).